The following is a 284-amino-acid chain: Nucleotide-binding protein Sbal223_0704 (284 aa).

8–15 (GRSGSGKS) provides a ligand contact to ATP. 56–59 (DVRN) is a GTP binding site.

Belongs to the RapZ-like family.

In terms of biological role, displays ATPase and GTPase activities. In Shewanella baltica (strain OS223), this protein is Nucleotide-binding protein Sbal223_0704.